The primary structure comprises 29 residues: Cytochrome b6-f complex subunit 8 (29 aa).

The helical transmembrane segment at 3–23 threads the bilayer; the sequence is ILTLGWVSLLVVFTWSIAMVV.

This sequence belongs to the PetN family. In terms of assembly, the 4 large subunits of the cytochrome b6-f complex are cytochrome b6, subunit IV (17 kDa polypeptide, PetD), cytochrome f and the Rieske protein, while the 4 small subunits are PetG, PetL, PetM and PetN. The complex functions as a dimer.

Its subcellular location is the cellular thylakoid membrane. Functionally, component of the cytochrome b6-f complex, which mediates electron transfer between photosystem II (PSII) and photosystem I (PSI), cyclic electron flow around PSI, and state transitions. The protein is Cytochrome b6-f complex subunit 8 of Nostoc punctiforme (strain ATCC 29133 / PCC 73102).